The following is a 441-amino-acid chain: Ribulose bisphosphate carboxylase large chain (441 aa).

Lys-5 bears the N6,N6,N6-trimethyllysine mark. Residues Asn-114 and Thr-164 each coordinate substrate. Residue Lys-166 is the Proton acceptor of the active site. Lys-168 lines the substrate pocket. The Mg(2+) site is built by Lys-192, Asp-194, and Glu-195. Lys-192 bears the N6-carboxylysine mark. The Proton acceptor role is filled by His-285. Substrate is bound by residues Arg-286, His-318, and Ser-370.

This sequence belongs to the RuBisCO large chain family. Type I subfamily. As to quaternary structure, heterohexadecamer of 8 large chains and 8 small chains; disulfide-linked. The disulfide link is formed within the large subunit homodimers. It depends on Mg(2+) as a cofactor. Post-translationally, the disulfide bond which can form in the large chain dimeric partners within the hexadecamer appears to be associated with oxidative stress and protein turnover.

It localises to the plastid. The protein resides in the chloroplast. It carries out the reaction 2 (2R)-3-phosphoglycerate + 2 H(+) = D-ribulose 1,5-bisphosphate + CO2 + H2O. It catalyses the reaction D-ribulose 1,5-bisphosphate + O2 = 2-phosphoglycolate + (2R)-3-phosphoglycerate + 2 H(+). Its function is as follows. RuBisCO catalyzes two reactions: the carboxylation of D-ribulose 1,5-bisphosphate, the primary event in carbon dioxide fixation, as well as the oxidative fragmentation of the pentose substrate in the photorespiration process. Both reactions occur simultaneously and in competition at the same active site. The polypeptide is Ribulose bisphosphate carboxylase large chain (Drosera dichrosepala (Rusty sundew)).